The following is a 293-amino-acid chain: 4-hydroxy-tetrahydrodipicolinate synthase (293 aa).

Thr-44 contacts pyruvate. The active-site Proton donor/acceptor is Tyr-132. Lys-162 acts as the Schiff-base intermediate with substrate in catalysis. Ile-204 contributes to the pyruvate binding site.

The protein belongs to the DapA family. As to quaternary structure, homotetramer; dimer of dimers.

It is found in the cytoplasm. It carries out the reaction L-aspartate 4-semialdehyde + pyruvate = (2S,4S)-4-hydroxy-2,3,4,5-tetrahydrodipicolinate + H2O + H(+). Its pathway is amino-acid biosynthesis; L-lysine biosynthesis via DAP pathway; (S)-tetrahydrodipicolinate from L-aspartate: step 3/4. Its function is as follows. Catalyzes the condensation of (S)-aspartate-beta-semialdehyde [(S)-ASA] and pyruvate to 4-hydroxy-tetrahydrodipicolinate (HTPA). In Erythrobacter litoralis (strain HTCC2594), this protein is 4-hydroxy-tetrahydrodipicolinate synthase.